The primary structure comprises 147 residues: UPF0306 protein YhbP (147 aa).

It belongs to the UPF0306 family.

The sequence is that of UPF0306 protein YhbP from Escherichia coli O157:H7 (strain EC4115 / EHEC).